The chain runs to 179 residues: Large ribosomal subunit protein uL5 (179 aa).

This sequence belongs to the universal ribosomal protein uL5 family. As to quaternary structure, part of the 50S ribosomal subunit; part of the 5S rRNA/L5/L18/L25 subcomplex. Contacts the 5S rRNA and the P site tRNA. Forms a bridge to the 30S subunit in the 70S ribosome.

In terms of biological role, this is one of the proteins that bind and probably mediate the attachment of the 5S RNA into the large ribosomal subunit, where it forms part of the central protuberance. In the 70S ribosome it contacts protein S13 of the 30S subunit (bridge B1b), connecting the 2 subunits; this bridge is implicated in subunit movement. Contacts the P site tRNA; the 5S rRNA and some of its associated proteins might help stabilize positioning of ribosome-bound tRNAs. The polypeptide is Large ribosomal subunit protein uL5 (Francisella tularensis subsp. mediasiatica (strain FSC147)).